The chain runs to 336 residues: UDP-3-O-acylglucosamine N-acyltransferase (336 aa).

Residue histidine 233 is the Proton acceptor of the active site.

It belongs to the transferase hexapeptide repeat family. LpxD subfamily. Homotrimer.

It carries out the reaction a UDP-3-O-[(3R)-3-hydroxyacyl]-alpha-D-glucosamine + a (3R)-hydroxyacyl-[ACP] = a UDP-2-N,3-O-bis[(3R)-3-hydroxyacyl]-alpha-D-glucosamine + holo-[ACP] + H(+). Its pathway is bacterial outer membrane biogenesis; LPS lipid A biosynthesis. In terms of biological role, catalyzes the N-acylation of UDP-3-O-acylglucosamine using 3-hydroxyacyl-ACP as the acyl donor. Is involved in the biosynthesis of lipid A, a phosphorylated glycolipid that anchors the lipopolysaccharide to the outer membrane of the cell. The sequence is that of UDP-3-O-acylglucosamine N-acyltransferase from Helicobacter pylori (strain ATCC 700392 / 26695) (Campylobacter pylori).